The chain runs to 390 residues: Adherens junction-associated protein 1 (390 aa).

An N-terminal signal peptide occupies residues 1 to 37 (MWITQLLGIRSGPPLGSHAWILIAIFQLAMDFIICES). The Extracellular segment spans residues 38 to 262 (ESPGKAYKHL…NDTSGLAVHQ (225 aa)). The disordered stretch occupies residues 218 to 253 (LQNPGIHNGKKSPGRISTTDPNPGNGKTARPPRIPN). The helical transmembrane segment at 263 to 283 (IITITVSLIMVIAALITTLVL) threads the bilayer. Residues 283-390 (LKNCCAQSGN…VSEKWFEISC (108 aa)) are targeting signals. At 284–390 (KNCCAQSGNA…VSEKWFEISC (107 aa)) the chain is on the cytoplasmic side.

It localises to the basolateral cell membrane. Its subcellular location is the apical cell membrane. It is found in the cell junction. The protein localises to the adherens junction. May play a role in cell adhesion and cell migration. In Xenopus tropicalis (Western clawed frog), this protein is Adherens junction-associated protein 1 (ajap1).